The primary structure comprises 266 residues: tRNA pseudouridine synthase A (266 aa).

D56 acts as the Nucleophile in catalysis. A substrate-binding site is contributed by Y110.

It belongs to the tRNA pseudouridine synthase TruA family.

The catalysed reaction is uridine(38/39/40) in tRNA = pseudouridine(38/39/40) in tRNA. Its function is as follows. Formation of pseudouridine at positions 38, 39 and 40 in the anticodon stem and loop of transfer RNAs. This chain is tRNA pseudouridine synthase A, found in Halobacterium salinarum (strain ATCC 29341 / DSM 671 / R1).